Here is a 241-residue protein sequence, read N- to C-terminus: 3-deoxy-manno-octulosonate cytidylyltransferase (241 aa).

The protein belongs to the KdsB family.

Its subcellular location is the cytoplasm. It catalyses the reaction 3-deoxy-alpha-D-manno-oct-2-ulosonate + CTP = CMP-3-deoxy-beta-D-manno-octulosonate + diphosphate. The protein operates within nucleotide-sugar biosynthesis; CMP-3-deoxy-D-manno-octulosonate biosynthesis; CMP-3-deoxy-D-manno-octulosonate from 3-deoxy-D-manno-octulosonate and CTP: step 1/1. Its pathway is bacterial outer membrane biogenesis; lipopolysaccharide biosynthesis. In terms of biological role, activates KDO (a required 8-carbon sugar) for incorporation into bacterial lipopolysaccharide in Gram-negative bacteria. In Rickettsia typhi (strain ATCC VR-144 / Wilmington), this protein is 3-deoxy-manno-octulosonate cytidylyltransferase.